We begin with the raw amino-acid sequence, 332 residues long: Agamous-like MADS-box protein AGL66 (332 aa).

Positions 1 to 61 (MGRVKLEIKR…DRLSLFSGKT (61 aa)) constitute an MADS-box domain. The stretch at 120 to 151 (TAINSDVEELEHEVYKLQQQLLMAEEELRKYE) forms a coiled coil.

Forms a heterodimer with AGL30. Expressed in pollen.

Its subcellular location is the nucleus. Probable transcription factor that forms a heterodimer with the MADS-box protein AGL30 and is involved in the regulation of pollen maturation at the late stages of pollen development and pollen tube growth. This is Agamous-like MADS-box protein AGL66 from Arabidopsis thaliana (Mouse-ear cress).